The chain runs to 309 residues: Malate dehydrogenase (309 aa).

NAD(+) is bound by residues 6 to 11 and D31; that span reads GSGRVG. Substrate is bound by residues R80 and R86. Residues N93 and 116 to 118 each bind NAD(+); that span reads TTN. 2 residues coordinate substrate: N118 and R149. The active-site Proton acceptor is the H173.

It belongs to the LDH/MDH superfamily.

It carries out the reaction (S)-malate + NAD(+) = oxaloacetate + NADH + H(+). In terms of biological role, catalyzes the reversible oxidation of malate to oxaloacetate. The sequence is that of Malate dehydrogenase (mdh) from Pyrobaculum calidifontis (strain DSM 21063 / JCM 11548 / VA1).